A 588-amino-acid polypeptide reads, in one-letter code: Protein cereblon (588 aa).

Disordered stretches follow at residues 1 to 107 and 159 to 197; these read MDDE…DDSD and QERR…DIGF. The segment covering 41–50 has biased composition (polar residues); that stretch reads AWNNATQDEQ. A compositionally biased stretch (acidic residues) spans 75-85; the sequence is MVEDVLQDDTA. Polar residues predominate over residues 86-96; the sequence is SEGSHPSSDMS. The span at 159-168 shows a compositional bias: basic and acidic residues; that stretch reads QERRRSRTSE. A compositionally biased stretch (pro residues) spans 181-192; that stretch reads NDPPPQQPPRPP. The region spanning 228–454 is the Lon N-terminal domain; sequence HMLIFLHQHI…LIKSTFKDES (227 aa). Residues 453–562 enclose the CULT domain; sequence ESLFFCRYCN…LAGSSVRIGK (110 aa). 4 residues coordinate Zn(2+): Cys-458, Cys-461, Cys-527, and Cys-530.

The protein belongs to the CRBN family. In terms of assembly, likely a component of a DCX (DDB1-CUL4-X-box) protein ligase complex. May interact with pic/DDB1. Post-translationally, ubiquitinated.

The protein resides in the nucleus. It functions in the pathway protein modification; protein ubiquitination. Functionally, substrate recognition component of a DCX (DDB1-CUL4-X-box) E3 protein ligase complex that mediates the ubiquitination and subsequent proteasomal degradation of target proteins. Has an essential role in mediating growth by negatively regulating insulin signaling. It also has a role in maintaining presynaptic function in the neuromuscular junction synapses of third-instar larvae. The polypeptide is Protein cereblon (Drosophila yakuba (Fruit fly)).